We begin with the raw amino-acid sequence, 132 residues long: Large ribosomal subunit protein bL19 (132 aa).

Belongs to the bacterial ribosomal protein bL19 family.

In terms of biological role, this protein is located at the 30S-50S ribosomal subunit interface and may play a role in the structure and function of the aminoacyl-tRNA binding site. The polypeptide is Large ribosomal subunit protein bL19 (Rhodospirillum centenum (strain ATCC 51521 / SW)).